Reading from the N-terminus, the 123-residue chain is Small ribosomal subunit protein uS12 (123 aa).

The disordered stretch occupies residues 1–30 (MPTIQQLIRKPRQPKVQRSKSQHLQSCPQK). A compositionally biased stretch (basic residues) spans 9–21 (RKPRQPKVQRSKS). Aspartate 89 bears the 3-methylthioaspartic acid mark.

Belongs to the universal ribosomal protein uS12 family. In terms of assembly, part of the 30S ribosomal subunit. Contacts proteins S8 and S17. May interact with IF1 in the 30S initiation complex.

In terms of biological role, with S4 and S5 plays an important role in translational accuracy. Functionally, interacts with and stabilizes bases of the 16S rRNA that are involved in tRNA selection in the A site and with the mRNA backbone. Located at the interface of the 30S and 50S subunits, it traverses the body of the 30S subunit contacting proteins on the other side and probably holding the rRNA structure together. The combined cluster of proteins S8, S12 and S17 appears to hold together the shoulder and platform of the 30S subunit. The sequence is that of Small ribosomal subunit protein uS12 from Paracoccus denitrificans (strain Pd 1222).